The primary structure comprises 729 residues: Fatty acid oxidation complex subunit alpha (729 aa).

The enoyl-CoA hydratase/isomerase stretch occupies residues 1–189 (MLYKGDTLYL…KIGLVDGVVK (189 aa)). Asp-296 provides a ligand contact to substrate. The interval 311–729 (ETPKQAAVLG…ARLVGDLKTA (419 aa)) is 3-hydroxyacyl-CoA dehydrogenase. NAD(+) is bound by residues Met-324, Asp-343, 400-402 (VVE), Lys-407, and Ser-429. Catalysis depends on His-450, which acts as the For 3-hydroxyacyl-CoA dehydrogenase activity. Residue Asn-453 participates in NAD(+) binding. The substrate site is built by Asn-500 and Tyr-660.

It in the N-terminal section; belongs to the enoyl-CoA hydratase/isomerase family. In the C-terminal section; belongs to the 3-hydroxyacyl-CoA dehydrogenase family. Heterotetramer of two alpha chains (FadB) and two beta chains (FadA).

The enzyme catalyses a (3S)-3-hydroxyacyl-CoA + NAD(+) = a 3-oxoacyl-CoA + NADH + H(+). It catalyses the reaction a (3S)-3-hydroxyacyl-CoA = a (2E)-enoyl-CoA + H2O. It carries out the reaction a 4-saturated-(3S)-3-hydroxyacyl-CoA = a (3E)-enoyl-CoA + H2O. The catalysed reaction is (3S)-3-hydroxybutanoyl-CoA = (3R)-3-hydroxybutanoyl-CoA. The enzyme catalyses a (3Z)-enoyl-CoA = a 4-saturated (2E)-enoyl-CoA. It catalyses the reaction a (3E)-enoyl-CoA = a 4-saturated (2E)-enoyl-CoA. Its pathway is lipid metabolism; fatty acid beta-oxidation. In terms of biological role, involved in the aerobic and anaerobic degradation of long-chain fatty acids via beta-oxidation cycle. Catalyzes the formation of 3-oxoacyl-CoA from enoyl-CoA via L-3-hydroxyacyl-CoA. It can also use D-3-hydroxyacyl-CoA and cis-3-enoyl-CoA as substrate. The chain is Fatty acid oxidation complex subunit alpha from Escherichia coli (strain SE11).